A 457-amino-acid chain; its full sequence is Bifunctional protein GlmU (457 aa).

The tract at residues 1 to 232 (MNNLAAVILA…PAEVMGINDR (232 aa)) is pyrophosphorylase. UDP-N-acetyl-alpha-D-glucosamine is bound by residues 9-12 (LAAG), K23, Q75, and 80-81 (GT). D105 contacts Mg(2+). 4 residues coordinate UDP-N-acetyl-alpha-D-glucosamine: G142, E157, N172, and N230. N230 is a binding site for Mg(2+). The interval 233-253 (AQLAEAGQLLRGRINKALMLD) is linker. Residues 254–457 (GTTLIDPQTT…NKEGWKLKKK (204 aa)) are N-acetyltransferase. The UDP-N-acetyl-alpha-D-glucosamine site is built by R336 and K354. H366 functions as the Proton acceptor in the catalytic mechanism. Y369 and N380 together coordinate UDP-N-acetyl-alpha-D-glucosamine. Acetyl-CoA contacts are provided by residues 389 to 390 (NY), S408, A426, and R443.

This sequence in the N-terminal section; belongs to the N-acetylglucosamine-1-phosphate uridyltransferase family. In the C-terminal section; belongs to the transferase hexapeptide repeat family. In terms of assembly, homotrimer. The cofactor is Mg(2+).

The protein resides in the cytoplasm. The enzyme catalyses alpha-D-glucosamine 1-phosphate + acetyl-CoA = N-acetyl-alpha-D-glucosamine 1-phosphate + CoA + H(+). It carries out the reaction N-acetyl-alpha-D-glucosamine 1-phosphate + UTP + H(+) = UDP-N-acetyl-alpha-D-glucosamine + diphosphate. It functions in the pathway nucleotide-sugar biosynthesis; UDP-N-acetyl-alpha-D-glucosamine biosynthesis; N-acetyl-alpha-D-glucosamine 1-phosphate from alpha-D-glucosamine 6-phosphate (route II): step 2/2. The protein operates within nucleotide-sugar biosynthesis; UDP-N-acetyl-alpha-D-glucosamine biosynthesis; UDP-N-acetyl-alpha-D-glucosamine from N-acetyl-alpha-D-glucosamine 1-phosphate: step 1/1. Its pathway is bacterial outer membrane biogenesis; LPS lipid A biosynthesis. Functionally, catalyzes the last two sequential reactions in the de novo biosynthetic pathway for UDP-N-acetylglucosamine (UDP-GlcNAc). The C-terminal domain catalyzes the transfer of acetyl group from acetyl coenzyme A to glucosamine-1-phosphate (GlcN-1-P) to produce N-acetylglucosamine-1-phosphate (GlcNAc-1-P), which is converted into UDP-GlcNAc by the transfer of uridine 5-monophosphate (from uridine 5-triphosphate), a reaction catalyzed by the N-terminal domain. The sequence is that of Bifunctional protein GlmU from Geotalea uraniireducens (strain Rf4) (Geobacter uraniireducens).